A 144-amino-acid chain; its full sequence is Grifin (144 aa).

A Galectin domain is found at 5 to 133; it reads FEAFCAGGLA…DHQLAQVELA (129 aa). Serine 138 is modified (phosphoserine).

As to quaternary structure, homodimer. Lens-specific. Located at the interface between lens fiber cells (at protein level).

The chain is Grifin (Grifin) from Rattus norvegicus (Rat).